Reading from the N-terminus, the 393-residue chain is S-adenosylmethionine synthase (393 aa).

Histidine 16 is a binding site for ATP. Aspartate 18 is a Mg(2+) binding site. Glutamate 44 provides a ligand contact to K(+). Positions 57 and 100 each coordinate L-methionine. The tract at residues 100 to 110 (QSNDIAQGVDH) is flexible loop. Residues 167–169 (DAK), 238–239 (RF), aspartate 247, 253–254 (RK), alanine 270, and lysine 274 contribute to the ATP site. Aspartate 247 lines the L-methionine pocket. Residue lysine 278 participates in L-methionine binding.

Belongs to the AdoMet synthase family. As to quaternary structure, homotetramer; dimer of dimers. Mg(2+) is required as a cofactor. Requires K(+) as cofactor.

Its subcellular location is the cytoplasm. It catalyses the reaction L-methionine + ATP + H2O = S-adenosyl-L-methionine + phosphate + diphosphate. The protein operates within amino-acid biosynthesis; S-adenosyl-L-methionine biosynthesis; S-adenosyl-L-methionine from L-methionine: step 1/1. Functionally, catalyzes the formation of S-adenosylmethionine (AdoMet) from methionine and ATP. The overall synthetic reaction is composed of two sequential steps, AdoMet formation and the subsequent tripolyphosphate hydrolysis which occurs prior to release of AdoMet from the enzyme. The chain is S-adenosylmethionine synthase from Acidovorax sp. (strain JS42).